We begin with the raw amino-acid sequence, 264 residues long: 3-methyl-2-oxobutanoate hydroxymethyltransferase (264 aa).

Asp-44 and Asp-83 together coordinate Mg(2+). Residues 44–45, Asp-83, and Lys-111 each bind 3-methyl-2-oxobutanoate; that span reads DS. Glu-113 contacts Mg(2+). Catalysis depends on Glu-180, which acts as the Proton acceptor.

This sequence belongs to the PanB family. As to quaternary structure, homodecamer; pentamer of dimers. Mg(2+) is required as a cofactor.

It is found in the cytoplasm. It catalyses the reaction 3-methyl-2-oxobutanoate + (6R)-5,10-methylene-5,6,7,8-tetrahydrofolate + H2O = 2-dehydropantoate + (6S)-5,6,7,8-tetrahydrofolate. It participates in cofactor biosynthesis; (R)-pantothenate biosynthesis; (R)-pantoate from 3-methyl-2-oxobutanoate: step 1/2. Catalyzes the reversible reaction in which hydroxymethyl group from 5,10-methylenetetrahydrofolate is transferred onto alpha-ketoisovalerate to form ketopantoate. This is 3-methyl-2-oxobutanoate hydroxymethyltransferase from Marinobacter nauticus (strain ATCC 700491 / DSM 11845 / VT8) (Marinobacter aquaeolei).